Reading from the N-terminus, the 179-residue chain is Large ribosomal subunit protein uL6 (179 aa).

It belongs to the universal ribosomal protein uL6 family. Part of the 50S ribosomal subunit.

Its function is as follows. This protein binds to the 23S rRNA, and is important in its secondary structure. It is located near the subunit interface in the base of the L7/L12 stalk, and near the tRNA binding site of the peptidyltransferase center. This is Large ribosomal subunit protein uL6 from Bifidobacterium longum (strain DJO10A).